The sequence spans 531 residues: Cytochrome P450 monooxygenase ffsD (531 aa).

Residues 40–60 form a helical membrane-spanning segment; that stretch reads VGALLGISLSVVLLLWVISVV. Heme is bound at residue Cys-475.

It belongs to the cytochrome P450 family. Requires heme as cofactor.

The protein localises to the membrane. Its pathway is mycotoxin biosynthesis. Cytochrome P450 monooxygenase; part of the gene cluster that mediates the biosynthesis of the cytotoxic leucine-containing cytochalasans, including aspochalasin C, aspochalasin E, TMC-169, flavichalasine F, aspergillin PZ, aspochalasin M and flavichalasine G. The first step in the pathway is catalyzed by the hybrid PKS-NRPS ffsA that utilizes 8 units of malonyl-CoA to iteratively assemble the octaketide chain before addition of L-leucine by the C-terminal NRPS modules. Because ffsA lacks a designated enoylreductase (ER) domain, the required activity is provided the enoyl reductase fssC. The methyltransferase (MT) domain of ffsA catalyzes the alpha-methylation at C10 and C14 using S-adenosyl-L-methionine as the methyl-donating cosubstrate. Reduction by the hydrolyase ffsE, followed by dehydration and intra-molecular Diels-Alder cyclization by the Diels-Alderase ffsF then yield the required isoindolone-fused macrocycle. A number of oxidative steps catalyzed by the tailoring cytochrome P450 monooxygenase ffsD, the FAD-linked oxidoreductase ffsJ and the short-chain dehydrogenase/reductase ffsI, are further required to afford the final products. The chain is Cytochrome P450 monooxygenase ffsD from Aspergillus flavipes.